A 71-amino-acid polypeptide reads, in one-letter code: Permeability factor 2 (71 aa).

Intrachain disulfides connect cysteine 7/cysteine 33 and cysteine 9/cysteine 49.

It belongs to the intercrine alpha (chemokine CxC) family. As to quaternary structure, homodimer.

The protein localises to the secreted. Functionally, has chemotactic activity for neutrophils. The chain is Permeability factor 2 from Oryctolagus cuniculus (Rabbit).